The primary structure comprises 389 residues: uncharacterized protein (389 aa).

3 WD repeats span residues 11 to 53 (SFGS…QKIK), 146 to 186 (SHHD…EEDA), and 289 to 330 (AHGD…LDIP). Phosphoserine is present on S351. The disordered stretch occupies residues 361 to 389 (QKESVSTRPRKEKHKKAKKHSMKSRFKPY). Over residues 368–389 (RPRKEKHKKAKKHSMKSRFKPY) the composition is skewed to basic residues.

This is an uncharacterized protein from Saccharomyces cerevisiae (strain ATCC 204508 / S288c) (Baker's yeast).